Consider the following 238-residue polypeptide: Ribonuclease PH (238 aa).

Phosphate-binding positions include Arg86 and 124–126 (GTR).

Belongs to the RNase PH family. In terms of assembly, homohexameric ring arranged as a trimer of dimers.

It catalyses the reaction tRNA(n+1) + phosphate = tRNA(n) + a ribonucleoside 5'-diphosphate. Its function is as follows. Phosphorolytic 3'-5' exoribonuclease that plays an important role in tRNA 3'-end maturation. Removes nucleotide residues following the 3'-CCA terminus of tRNAs; can also add nucleotides to the ends of RNA molecules by using nucleoside diphosphates as substrates, but this may not be physiologically important. Probably plays a role in initiation of 16S rRNA degradation (leading to ribosome degradation) during starvation. The chain is Ribonuclease PH from Rhizorhabdus wittichii (strain DSM 6014 / CCUG 31198 / JCM 15750 / NBRC 105917 / EY 4224 / RW1) (Sphingomonas wittichii).